We begin with the raw amino-acid sequence, 1099 residues long: SLIT-ROBO Rho GTPase-activating protein 3 (1099 aa).

In terms of domain architecture, F-BAR spans 19–314; the sequence is AQIKEIRTQL…AVDNLDSRSD (296 aa). Residues 352-392 are a coiled coil; sequence QTELLMRYHQLQSRLATLKIENEEVRKTLDATMQTLQDMLT. Residues 470 to 493 are disordered; the sequence is GERAECGTTRPPCLPPKPQKMRRP. The region spanning 506-694 is the Rho-GAP domain; that stretch reads GSMEAFIKDS…TIIIHHEAIF (189 aa). Residues 744–803 form the SH3 domain; that stretch reads VEQIEAIAKFDYVGRSPRELSFKKGASLLLYHRASEDWWEGRHNGVDGLIPHQYIVVQDM. The segment covering 809-820 has biased composition (polar residues); the sequence is DSLSQKADSEAS. The segment at 809-846 is disordered; the sequence is DSLSQKADSEASSGPLLDDKASSKNDLQSPTEHISDYG. Serine 817, serine 820, serine 821, serine 837, and serine 858 each carry phosphoserine. A disordered region spans residues 861-911; it reads AAIPRRRSGGDTHSPPRGLGPSIDTPPRAAACPSSPHKIPLSRGRIESPEK. The stretch at 952–987 forms a coiled coil; sequence HKSLEAEALAEDIEKTMSTALHELRELERQNTVKQA. At serine 954 the chain carries Phosphoserine. Disordered stretches follow at residues 994–1014 and 1045–1099; these read TLEPLKNPPGPISSEPASPLH and ARLA…SGTM. Residues 1060–1074 are compositionally biased toward low complexity; that stretch reads VRPVVQHRSSSSSSS. Residues 1089–1099 are compositionally biased toward polar residues; sequence PNSSSDKSGTM.

As to quaternary structure, homodimer. Forms a heterooligomer with SRGAP1 and SRGAP2 through its F-BAR domain. Interacts with WASF1. Probably interacts with ROBO1. Interacts with FASLG.

In terms of biological role, GTPase-activating protein for RAC1 and perhaps CDC42, but not for RhoA small GTPase. May attenuate RAC1 signaling in neurons. This chain is SLIT-ROBO Rho GTPase-activating protein 3 (Srgap3), found in Mus musculus (Mouse).